An 858-amino-acid polypeptide reads, in one-letter code: Putative glutamate--cysteine ligase 2-3 (858 aa).

Residues 1–372 (MSDARNVAVG…RDVPPAGASL (372 aa)) form a carboxylate-amine ligase region. Residues 373 to 858 (GVAPAVSAPD…GSKDTWIPRR (486 aa)) are unknown.

In the N-terminal section; belongs to the glutamate--cysteine ligase type 2 family. YbdK subfamily.

The catalysed reaction is L-cysteine + L-glutamate + ATP = gamma-L-glutamyl-L-cysteine + ADP + phosphate + H(+). Its function is as follows. ATP-dependent carboxylate-amine ligase which exhibits weak glutamate--cysteine ligase activity. The polypeptide is Putative glutamate--cysteine ligase 2-3 (Frankia alni (strain DSM 45986 / CECT 9034 / ACN14a)).